A 65-amino-acid chain; its full sequence is Putative beta-neurotoxin RjAa8 (65 aa).

In terms of domain architecture, LCN-type CS-alpha/beta spans 1–64 (KEGYPMGRDG…VWDSSTNKCG (64 aa)). 4 cysteine pairs are disulfide-bonded: cysteine 11-cysteine 63, cysteine 15-cysteine 37, cysteine 22-cysteine 44, and cysteine 26-cysteine 46.

The protein belongs to the long (4 C-C) scorpion toxin superfamily. Sodium channel inhibitor family. Beta subfamily. In terms of tissue distribution, expressed by the venom gland.

The protein localises to the secreted. Its function is as follows. Beta toxins bind voltage-independently at site-4 of sodium channels (Nav) and shift the voltage of activation toward more negative potentials thereby affecting sodium channel activation and promoting spontaneous and repetitive firing. In Rhopalurus junceus (Caribbean blue scorpion), this protein is Putative beta-neurotoxin RjAa8.